A 544-amino-acid chain; its full sequence is Probable protein kinase UbiB (544 aa).

A Protein kinase domain is found at 123-501 (DFDIEPLASA…KRQQATGKFL (379 aa)). Residues 129-137 (LASASIAQV) and Lys152 each bind ATP. Asp287 serves as the catalytic Proton acceptor. Residues 500–520 (FLFGVGATLVVCSAILVSSPY) traverse the membrane as a helical segment.

This sequence belongs to the ABC1 family. UbiB subfamily.

It is found in the cell inner membrane. Its pathway is cofactor biosynthesis; ubiquinone biosynthesis [regulation]. Functionally, is probably a protein kinase regulator of UbiI activity which is involved in aerobic coenzyme Q (ubiquinone) biosynthesis. This Vibrio atlanticus (strain LGP32) (Vibrio splendidus (strain Mel32)) protein is Probable protein kinase UbiB.